Reading from the N-terminus, the 332-residue chain is Biotin synthase (332 aa).

The region spanning 53–282 (YFGKKVKLNM…SKEIRISGGR (230 aa)) is the Radical SAM core domain. The [4Fe-4S] cluster site is built by C71, C75, and C78. C115, C147, C207, and R277 together coordinate [2Fe-2S] cluster.

Belongs to the radical SAM superfamily. Biotin synthase family. Homodimer. [4Fe-4S] cluster is required as a cofactor. Requires [2Fe-2S] cluster as cofactor.

The enzyme catalyses (4R,5S)-dethiobiotin + (sulfur carrier)-SH + 2 reduced [2Fe-2S]-[ferredoxin] + 2 S-adenosyl-L-methionine = (sulfur carrier)-H + biotin + 2 5'-deoxyadenosine + 2 L-methionine + 2 oxidized [2Fe-2S]-[ferredoxin]. It participates in cofactor biosynthesis; biotin biosynthesis; biotin from 7,8-diaminononanoate: step 2/2. Its function is as follows. Catalyzes the conversion of dethiobiotin (DTB) to biotin by the insertion of a sulfur atom into dethiobiotin via a radical-based mechanism. In Bacillus cytotoxicus (strain DSM 22905 / CIP 110041 / 391-98 / NVH 391-98), this protein is Biotin synthase.